The chain runs to 406 residues: MNNPIEGHAGGRLRVLVLGSTGSIGTQALEVIAANPDRFEVVGLAAGGAQLDTLLRQRAATGVTNIAIADDRAAQLAGDIPYHGTDAVTRLVEETEADVVLNALVGALGLRPTLAALHTGARLALANKESLVAGGSLVLAAAQPGQIVPVDSEHSALAQCLRGGTPDEVAKLVLTASGGPFRGWNAGDLERVTPEQAGVHPTWSMGTMNTLNSASLVNKGLELIEANLLFGIPYDRIEVVVHPQSIVHSMVTFIDGSTIAQASPPDMKLPISLALGWPQRVGGAARACAFTTASTWEFEPLDIDVFPAVELARHAGQIGGCMTAIYDAANEEAAEAFLQGRIGFPAIVATIADVLQRADQWAPQWGEGPATVDDVLDAQRWARERALCAVATASSGKVSDMVLERS.

NADPH-binding residues include threonine 21, glycine 22, serine 23, isoleucine 24, glycine 47, glutamine 50, and asparagine 127. Residue lysine 128 coordinates 1-deoxy-D-xylulose 5-phosphate. Glutamate 129 provides a ligand contact to NADPH. Mn(2+) is bound at residue aspartate 151. Residues serine 152, glutamate 153, serine 177, and histidine 200 each contribute to the 1-deoxy-D-xylulose 5-phosphate site. Residue glutamate 153 participates in Mn(2+) binding. Glycine 206 is a binding site for NADPH. 4 residues coordinate 1-deoxy-D-xylulose 5-phosphate: serine 213, asparagine 218, lysine 219, and glutamate 222. A Mn(2+)-binding site is contributed by glutamate 222.

Belongs to the DXR family. It depends on Mg(2+) as a cofactor. Requires Mn(2+) as cofactor.

The enzyme catalyses 2-C-methyl-D-erythritol 4-phosphate + NADP(+) = 1-deoxy-D-xylulose 5-phosphate + NADPH + H(+). It participates in isoprenoid biosynthesis; isopentenyl diphosphate biosynthesis via DXP pathway; isopentenyl diphosphate from 1-deoxy-D-xylulose 5-phosphate: step 1/6. Catalyzes the NADPH-dependent rearrangement and reduction of 1-deoxy-D-xylulose-5-phosphate (DXP) to 2-C-methyl-D-erythritol 4-phosphate (MEP). The sequence is that of 1-deoxy-D-xylulose 5-phosphate reductoisomerase from Mycobacterium leprae (strain Br4923).